A 122-amino-acid chain; its full sequence is UPF0102 protein RHECIAT_CH0000358 (122 aa).

This sequence belongs to the UPF0102 family.

This Rhizobium etli (strain CIAT 652) protein is UPF0102 protein RHECIAT_CH0000358.